Consider the following 579-residue polypeptide: Folliculin (579 aa).

The segment at 30-81 is disordered; it reads PQGDGNEDSPGQGEQAEEEEGGIQMNSRMRAHSPAEGASVESSSPGPKKSDM. Phosphoserine is present on residues S62 and S73. In terms of domain architecture, uDENN FLCN/SMCR8-type spans 86–242; it reads RSLAAGHPGY…RNGNAARSLT (157 aa). The tract at residues 210–220 is essential for interaction with LDHA; it reads AEQFGCPQRAQ. A coiled-coil region spans residues 287–310; it reads EKLADLEEESESWDNSEAEEEEKA. Positions 294-308 are enriched in acidic residues; it reads EESESWDNSEAEEEE. The tract at residues 294 to 337 is disordered; the sequence is EESESWDNSEAEEEEKAPVLPESTEGRELTQGPAESSSLSGCGS. Position 302 is a phosphoserine (S302). The segment covering 326 to 336 has biased composition (polar residues); that stretch reads PAESSSLSGCG. The cDENN FLCN/SMCR8-type domain maps to 339–491; that stretch reads QPRKLPVFKS…ILNKIEAALT (153 aa). A phosphoserine; by ULK1 mark is found at S406, S537, and S542. Positions 493–558 constitute a dDENN FLCN/SMCR8-type domain; the sequence is QNLSVDVVDQ…LLKFWMTGLS (66 aa). S571 carries the post-translational modification Phosphoserine.

This sequence belongs to the folliculin family. In terms of assembly, interacts (via C-terminus) with FNIP1 or FNIP2 (via C-terminus). Component of the lysosomal folliculin complex (LFC), composed of FLCN, FNIP1 (or FNIP2), RagA/RRAGA or RagB/RRAGB GDP-bound, RagC/RRAGC or RagD/RRAGD GTP-bound, and Ragulator. Interaction with FNIP1 or FNIP2 mediates indirect interaction with the PRKAA1, PRKAB1 and PRKAG1 subunits of 5'-AMP-activated protein kinase (AMPK). Interacts with HSP90AA1 in the presence of FNIP1. Interacts with HSP70, STUB1, CDC37, AHSA1, CCT2, STIP1, PTGES3 and PPP5C. Interacts with GABARAP; interaction takes place in the presence of FNIP1 and/or FNIP2. Interacts with RILP; the interaction is direct and promotes association between RILP and RAB34. Interacts with KIF3A and KIF3B. Interacts with lactate dehydrogenase LDHA, but not LDHB; the interaction is direct, may preferentially bind LDHA dimers rather than tetramers, and regulates LDHA activity, acting as an uncompetitive inhibitor. Phosphorylation by ULK1 modulates the interaction with GABARAP and is required to regulate autophagy. As to expression, expressed in most tissues tested, including skin, lung, kidney, heart, testis and stomach.

The protein localises to the lysosome membrane. The protein resides in the cytoplasm. It is found in the cytosol. It localises to the cell projection. Its subcellular location is the cilium. The protein localises to the cytoskeleton. The protein resides in the microtubule organizing center. It is found in the centrosome. It localises to the spindle. Its subcellular location is the nucleus. Its activity is regulated as follows. GTPase-activating activity is inhibited in the folliculin complex (LFC), which stabilizes the GDP-bound state of RagA/RRAGA (or RagB/RRAGB), because Arg-164 is located far from the RagC/RRAGC or RagD/RRAGD nucleotide pocket. Disassembly of the LFC complex upon amino acid restimulation liberates the GTPase-activating activity. Multi-functional protein, involved in both the cellular response to amino acid availability and in the regulation of glycolysis. GTPase-activating protein that plays a key role in the cellular response to amino acid availability through regulation of the non-canonical mTORC1 signaling cascade controlling the MiT/TFE factors TFEB and TFE3. Activates mTORC1 by acting as a GTPase-activating protein: specifically stimulates GTP hydrolysis by RagC/RRAGC or RagD/RRAGD, promoting the conversion to the GDP-bound state of RagC/RRAGC or RagD/RRAGD, and thereby activating the kinase activity of mTORC1. The GTPase-activating activity is inhibited during starvation and activated in presence of nutrients. Acts as a key component for non-canonical mTORC1-dependent control of the MiT/TFE factors TFEB and TFE3, while it is not involved in mTORC1-dependent phosphorylation of canonical RPS6KB1/S6K1 and EIF4EBP1/4E-BP1. In low-amino acid conditions, the lysosomal folliculin complex (LFC) is formed on the membrane of lysosomes, which inhibits the GTPase-activating activity of FLCN, inactivates mTORC1 and maximizes nuclear translocation of TFEB and TFE3. Upon amino acid restimulation, RagA/RRAGA (or RagB/RRAGB) nucleotide exchange promotes disassembly of the LFC complex and liberates the GTPase-activating activity of FLCN, leading to activation of mTORC1 and subsequent cytoplasmic retention of TFEB and TFE3. Indirectly acts as a positive regulator of Wnt signaling by promoting mTOR-dependent cytoplasmic retention of MiT/TFE factor TFE3. Required for the exit of hematopoietic stem cell from pluripotency by promoting mTOR-dependent cytoplasmic retention of TFE3, thereby increasing Wnt signaling. Acts as an inhibitor of browning of adipose tissue by regulating mTOR-dependent cytoplasmic retention of TFE3. Involved in the control of embryonic stem cells differentiation; together with LAMTOR1 it is necessary to recruit and activate RagC/RRAGC and RagD/RRAGD at the lysosomes, and to induce exit of embryonic stem cells from pluripotency via non-canonical, mTOR-independent TFE3 inactivation. In response to flow stress, regulates STK11/LKB1 accumulation and mTORC1 activation through primary cilia: may act by recruiting STK11/LKB1 to primary cilia for activation of AMPK resided at basal bodies, causing mTORC1 down-regulation. Together with FNIP1 and/or FNIP2, regulates autophagy: following phosphorylation by ULK1, interacts with GABARAP and promotes autophagy. Required for starvation-induced perinuclear clustering of lysosomes by promoting association of RILP with its effector RAB34. Regulates glycolysis by binding to lactate dehydrogenase LDHA, acting as an uncompetitive inhibitor. This chain is Folliculin, found in Homo sapiens (Human).